Here is a 138-residue protein sequence, read N- to C-terminus: MPYERLIYLADTDAAGVVYFAHLLSICHEAYEFSLAQFGINIKDFFKDSPVALPITQAEIQFFRPLFCGDRIQIDFTVRSLSENEFQLQYKIYLAEIMVAKAKTRHVCIAPTARKRIPLPESLKHWLGYLSTLEETGI.

Residue Asp-13 is part of the active site.

The protein belongs to the 4-hydroxybenzoyl-CoA thioesterase family. DHNA-CoA hydrolase subfamily.

It carries out the reaction 1,4-dihydroxy-2-naphthoyl-CoA + H2O = 1,4-dihydroxy-2-naphthoate + CoA + H(+). The protein operates within cofactor biosynthesis; phylloquinone biosynthesis. It functions in the pathway quinol/quinone metabolism; 1,4-dihydroxy-2-naphthoate biosynthesis; 1,4-dihydroxy-2-naphthoate from chorismate: step 7/7. Catalyzes the hydrolysis of 1,4-dihydroxy-2-naphthoyl-CoA (DHNA-CoA) to 1,4-dihydroxy-2-naphthoate (DHNA), a reaction involved in phylloquinone (vitamin K1) biosynthesis. The polypeptide is 1,4-dihydroxy-2-naphthoyl-CoA hydrolase (Microcystis aeruginosa (strain NIES-843 / IAM M-2473)).